The following is a 285-amino-acid chain: Polyamine aminopropyltransferase (285 aa).

Residues 2–237 enclose the PABS domain; sequence QMWFSQYHTV…GYWLFGFASK (236 aa). S-methyl-5'-thioadenosine is bound at residue Gln-31. Asp-86 contacts spermidine. Residues Glu-106 and 137–138 each bind S-methyl-5'-thioadenosine; that span reads DG. Residue Asp-155 is the Proton acceptor of the active site. 155–158 contacts spermidine; the sequence is DSTD.

It belongs to the spermidine/spermine synthase family. As to quaternary structure, homodimer or homotetramer.

The protein resides in the cytoplasm. The enzyme catalyses S-adenosyl 3-(methylsulfanyl)propylamine + putrescine = S-methyl-5'-thioadenosine + spermidine + H(+). The protein operates within amine and polyamine biosynthesis; spermidine biosynthesis; spermidine from putrescine: step 1/1. Catalyzes the irreversible transfer of a propylamine group from the amino donor S-adenosylmethioninamine (decarboxy-AdoMet) to putrescine (1,4-diaminobutane) to yield spermidine. The chain is Polyamine aminopropyltransferase from Agathobacter rectalis (strain ATCC 33656 / DSM 3377 / JCM 17463 / KCTC 5835 / VPI 0990) (Eubacterium rectale).